The following is an 87-amino-acid chain: MTNKLKKMLKFPCTFTYKVIGLAQPELTNNIIKIIQNHIPGDYAPQIKSSNKGTYLSISITICAKNFKQIKNLYNELSKIHLVRMVL.

The protein belongs to the UPF0250 family.

In Buchnera aphidicola subsp. Cinara cedri (strain Cc), this protein is UPF0250 protein BCc_307.